Reading from the N-terminus, the 498-residue chain is L-proline--[L-prolyl-carrier protein] ligase (498 aa).

This sequence belongs to the ATP-dependent AMP-binding enzyme family.

It catalyses the reaction holo-[peptidyl-carrier protein] + L-proline + ATP = L-prolyl-[peptidyl-carrier protein] + AMP + diphosphate. In terms of biological role, involved in the biosynthesis of pyoluteorin. Catalyzes the conversion of L-proline to L-prolyl-AMP and the transfer of the L-prolyl group to acyl carrier protein PltL. The polypeptide is L-proline--[L-prolyl-carrier protein] ligase (Pseudomonas fluorescens (strain ATCC BAA-477 / NRRL B-23932 / Pf-5)).